Reading from the N-terminus, the 396-residue chain is 1-deoxy-D-xylulose 5-phosphate reductoisomerase (396 aa).

Residues Thr10, Gly11, Ser12, Ile13, Asn38, and Asn123 each coordinate NADPH. Lys124 contributes to the 1-deoxy-D-xylulose 5-phosphate binding site. An NADPH-binding site is contributed by Glu125. Asp149 provides a ligand contact to Mn(2+). 1-deoxy-D-xylulose 5-phosphate is bound by residues Ser150, Glu151, Ser185, and His208. Glu151 lines the Mn(2+) pocket. NADPH is bound at residue Gly214. Ser221, Asn226, Lys227, and Glu230 together coordinate 1-deoxy-D-xylulose 5-phosphate. Residue Glu230 participates in Mn(2+) binding.

This sequence belongs to the DXR family. Mg(2+) serves as cofactor. Mn(2+) is required as a cofactor.

It catalyses the reaction 2-C-methyl-D-erythritol 4-phosphate + NADP(+) = 1-deoxy-D-xylulose 5-phosphate + NADPH + H(+). It participates in isoprenoid biosynthesis; isopentenyl diphosphate biosynthesis via DXP pathway; isopentenyl diphosphate from 1-deoxy-D-xylulose 5-phosphate: step 1/6. Catalyzes the NADPH-dependent rearrangement and reduction of 1-deoxy-D-xylulose-5-phosphate (DXP) to 2-C-methyl-D-erythritol 4-phosphate (MEP). The polypeptide is 1-deoxy-D-xylulose 5-phosphate reductoisomerase (Shewanella piezotolerans (strain WP3 / JCM 13877)).